We begin with the raw amino-acid sequence, 781 residues long: Ubiquitin carboxyl-terminal hydrolase 14 (781 aa).

The segment at 169-279 adopts a UBP-type zinc-finger fold; it reads STCPHTENFQ…SALQIYGINI (111 aa). Cys-171, His-173, Cys-192, Cys-195, Cys-204, Cys-207, Cys-212, His-224, His-228, His-235, Cys-253, and Cys-256 together coordinate Zn(2+). The USP domain maps to 323 to 781; it reads CGLINLGNSC…NGYIYFYTRC (459 aa). Cys-332 functions as the Nucleophile in the catalytic mechanism. 2 UBA domains span residues 576–626 and 649–689; these read DEDE…LFQH and EVDE…VFNN. His-737 (proton acceptor) is an active-site residue.

This sequence belongs to the peptidase C19 family.

It is found in the cytoplasm. It localises to the nucleus. The catalysed reaction is Thiol-dependent hydrolysis of ester, thioester, amide, peptide and isopeptide bonds formed by the C-terminal Gly of ubiquitin (a 76-residue protein attached to proteins as an intracellular targeting signal).. Functionally, required for the adaptation to the presence of glucose in the growth medium; mediates the degradation of enzymes involved in gluconeogenesis when cells are shifted to glucose-containing medium. Required for proteasome-dependent catabolite degradation of fructose-1,6-bisphosphatase (FBP1). Accelerates proteasomal breakdown of ubiquitinated proteins as it disassembles free ubiquitin chains that would compete with ubiquitinated proteins to bind to the proteasome. The polypeptide is Ubiquitin carboxyl-terminal hydrolase 14 (UBP14) (Saccharomyces cerevisiae (strain ATCC 204508 / S288c) (Baker's yeast)).